Consider the following 178-residue polypeptide: Large ribosomal subunit protein uL6 (178 aa).

It belongs to the universal ribosomal protein uL6 family. As to quaternary structure, part of the 50S ribosomal subunit.

Its function is as follows. This protein binds to the 23S rRNA, and is important in its secondary structure. It is located near the subunit interface in the base of the L7/L12 stalk, and near the tRNA binding site of the peptidyltransferase center. The sequence is that of Large ribosomal subunit protein uL6 from Maridesulfovibrio salexigens (strain ATCC 14822 / DSM 2638 / NCIMB 8403 / VKM B-1763) (Desulfovibrio salexigens).